Consider the following 432-residue polypeptide: Ornithine decarboxylase 1A, chloroplastic (432 aa).

At K95 the chain carries N6-(pyridoxal phosphate)lysine. Residues S227, G265, and 298–301 (EPGR) contribute to the pyridoxal 5'-phosphate site. 341–342 (YD) contacts substrate. The active-site Proton donor; shared with dimeric partner is C377. D378 serves as a coordination point for substrate. Y406 is a pyridoxal 5'-phosphate binding site.

The protein belongs to the Orn/Lys/Arg decarboxylase class-II family. Homodimer. Only the dimer is catalytically active, as the active sites are constructed of residues from both monomers. The cofactor is pyridoxal 5'-phosphate.

It localises to the plastid. The protein localises to the chloroplast. It carries out the reaction L-ornithine + H(+) = putrescine + CO2. Its pathway is alkaloid biosynthesis; nicotine biosynthesis. It participates in amine and polyamine biosynthesis; putrescine biosynthesis via L-ornithine pathway; putrescine from L-ornithine: step 1/1. Its function is as follows. Involved in the biosynthesis of pyridine alkaloid natural products, leading mainly to the production of anabasine, anatabine, nicotine and nornicotine, effective deterrents against herbivores with antiparasitic and pesticide properties (neurotoxins); nornicotine serves as the precursor in the synthesis of the carcinogen compound N'-nitrosonornicotine (NNN). Catalyzes the first and rate-limiting step of polyamine biosynthesis that converts ornithine into putrescine, which is the precursor for the polyamines, spermidine and spermine. Polyamines are essential for cell proliferation and are implicated in cellular processes, ranging from DNA replication to apoptosis. The protein is Ornithine decarboxylase 1A, chloroplastic of Nicotiana tabacum (Common tobacco).